Here is a 152-residue protein sequence, read N- to C-terminus: Large ribosomal subunit protein uL15 (152 aa).

The interval 1–57 (MTSTLNTLKSNSGSRKKKLRKGRGIAAGQGASCGFGMRGQKSRSGRPTRPGFEGGQM) is disordered. Residues 14–23 (SRKKKLRKGR) show a composition bias toward basic residues. The segment covering 25–37 (IAAGQGASCGFGM) has biased composition (gly residues).

The protein belongs to the universal ribosomal protein uL15 family. In terms of assembly, part of the 50S ribosomal subunit.

In terms of biological role, binds to the 23S rRNA. This Prochlorococcus marinus (strain MIT 9301) protein is Large ribosomal subunit protein uL15.